An 87-amino-acid chain; its full sequence is Small ribosomal subunit protein uS17 (87 aa).

This sequence belongs to the universal ribosomal protein uS17 family. As to quaternary structure, part of the 30S ribosomal subunit.

In terms of biological role, one of the primary rRNA binding proteins, it binds specifically to the 5'-end of 16S ribosomal RNA. The chain is Small ribosomal subunit protein uS17 from Heliobacterium modesticaldum (strain ATCC 51547 / Ice1).